The primary structure comprises 367 residues: Aldo-keto reductase AMT2 (367 aa).

Asp76 serves as a coordination point for NADP(+). Tyr81 functions as the Proton donor in the catalytic mechanism. Substrate is bound at residue His173. Residues 203–204 (SS), Gln229, 258–268 (GPLAAGKLARP), and 330–338 (SSVERMDEV) contribute to the NADP(+) site. The tract at residues 346–367 (LSDEEESRLEDPYKAQPPQGHS) is disordered.

This sequence belongs to the aldo/keto reductase family.

It functions in the pathway mycotoxin biosynthesis. Its function is as follows. Aldo-keto reductase; part of the gene clusters that mediate the biosynthesis of AM-toxins, host-selective toxins (HSTs) causing Alternaria blotch on apple, a worldwide distributed disease. AM-toxins are cyclic depsipeptides containing the 3 residues 2-hydroxy-isovaleric acid (2-HIV), dehydroalanine, L-alanine which are common for all 3 AM-toxins I to III. The fourth precursor is L-alpha-amino-methoxyphenyl-valeric acid (L-Amv) for AM-toxin I, L-alpha-amino-phenyl-valeric acid (L-Apv) for AM-toxin II, and L-alpha-amino-hydroxyphenyl-valeric acid (L-Ahv) for AM-toxin III. AM-toxins have two target sites for affecting susceptible apple cells; they cause invagination of the plasma membrane and electrolyte loss and chloroplast disorganization. The non-ribosomal peptide synthetase AMT1 contains 4 catalytic modules and is responsible for activation of each residue in AM-toxin. The aldo-keto reductase AMT2 catalyzes the conversion of 2-keto-isovaleric acid (2-KIV) to 2-hydroxy-isovaleric acid (2-HIV), one of the precursor residues incorporated by AMT1 during AM-toxin biosynthesis, by reduction of its ketone to an alcohol. The cytochrome P450 monooxygenase AMT3 and the thioesterase AMT4 are also important for AM-toxin production, but their exact function within the AM-toxin biosynthesis are not known yet. Up to 21 proteins (including AMT1 to AMT4) are predicted to be involved in AM-toxin biosynthesis since their expression ishighly up-regulated in AM-toxin-producing cultures. The chain is Aldo-keto reductase AMT2 from Alternaria alternata (Alternaria rot fungus).